Reading from the N-terminus, the 135-residue chain is L-alanine exporter AlaE (135 aa).

3 helical membrane passes run 9–29 (VATV…IAGM), 75–95 (DILA…LIAG), and 96–116 (ASFA…ILLA).

It belongs to the AlaE exporter family.

It is found in the cell inner membrane. Its function is as follows. Exports L-alanine. The polypeptide is L-alanine exporter AlaE (Cereibacter sphaeroides (strain ATCC 17023 / DSM 158 / JCM 6121 / CCUG 31486 / LMG 2827 / NBRC 12203 / NCIMB 8253 / ATH 2.4.1.) (Rhodobacter sphaeroides)).